The following is a 191-amino-acid chain: Endoribonuclease YbeY (191 aa).

3 residues coordinate Zn(2+): histidine 122, histidine 126, and histidine 132. The segment at 164–191 (QPKPSGPKAFPDAAERAELDKEVPGGGI) is disordered. Residues 176–191 (AAERAELDKEVPGGGI) are compositionally biased toward basic and acidic residues.

The protein belongs to the endoribonuclease YbeY family. Zn(2+) serves as cofactor.

The protein localises to the cytoplasm. In terms of biological role, single strand-specific metallo-endoribonuclease involved in late-stage 70S ribosome quality control and in maturation of the 3' terminus of the 16S rRNA. The chain is Endoribonuclease YbeY from Corynebacterium aurimucosum (strain ATCC 700975 / DSM 44827 / CIP 107346 / CN-1) (Corynebacterium nigricans).